A 160-amino-acid chain; its full sequence is Dihydrofolate reductase (160 aa).

One can recognise a DHFR domain in the interval 1–160; sequence MLIAIWAMTQ…NVNYYRKKQQ (160 aa). 5–7 provides a ligand contact to substrate; that stretch reads IWA. NADP(+)-binding positions include 6–7 and 14–19; these read WA and IGNNNT. Glu27 provides a ligand contact to substrate. Position 43–46 (43–46) interacts with NADP(+); it reads GRKT. Arg57 contacts substrate. NADP(+)-binding positions include 62–65 and 101–106; these read LSKD and CGGKSV. Ser120 lines the substrate pocket.

It belongs to the dihydrofolate reductase family.

It carries out the reaction (6S)-5,6,7,8-tetrahydrofolate + NADP(+) = 7,8-dihydrofolate + NADPH + H(+). It participates in cofactor biosynthesis; tetrahydrofolate biosynthesis; 5,6,7,8-tetrahydrofolate from 7,8-dihydrofolate: step 1/1. Key enzyme in folate metabolism. Catalyzes an essential reaction for de novo glycine and purine synthesis, and for DNA precursor synthesis. This Mycoplasma genitalium (strain ATCC 33530 / DSM 19775 / NCTC 10195 / G37) (Mycoplasmoides genitalium) protein is Dihydrofolate reductase (folA).